A 178-amino-acid chain; its full sequence is Large ribosomal subunit protein bL25 (178 aa).

Belongs to the bacterial ribosomal protein bL25 family. CTC subfamily. In terms of assembly, part of the 50S ribosomal subunit; part of the 5S rRNA/L5/L18/L25 subcomplex. Contacts the 5S rRNA. Binds to the 5S rRNA independently of L5 and L18.

In terms of biological role, this is one of the proteins that binds to the 5S RNA in the ribosome where it forms part of the central protuberance. The chain is Large ribosomal subunit protein bL25 from Sulfurimonas denitrificans (strain ATCC 33889 / DSM 1251) (Thiomicrospira denitrificans (strain ATCC 33889 / DSM 1251)).